The sequence spans 244 residues: AA9 family lytic polysaccharide monooxygenase B (244 aa).

Positions Met-1 to Ala-19 are cleaved as a signal peptide. His-20 contributes to the Cu(2+) binding site. Residue Tyr-39 coordinates (1,4-beta-D-glucosyl)n. Cystine bridges form between Cys-68-Cys-189 and Cys-111-Cys-115. Residue His-99 participates in Cu(2+) binding. Asn-152 is a glycosylation site (N-linked (GlcNAc...) asparagine). O2-binding residues include His-178 and Gln-184. Tyr-186 serves as a coordination point for Cu(2+). (1,4-beta-D-glucosyl)n-binding residues include Asp-224, Tyr-226, and Glu-229. Asn-233 carries an N-linked (GlcNAc...) asparagine glycan.

The protein belongs to the polysaccharide monooxygenase AA9 family. The cofactor is Cu(2+).

It localises to the secreted. It carries out the reaction [(1-&gt;4)-beta-D-glucosyl]n+m + reduced acceptor + O2 = 4-dehydro-beta-D-glucosyl-[(1-&gt;4)-beta-D-glucosyl]n-1 + [(1-&gt;4)-beta-D-glucosyl]m + acceptor + H2O.. Lytic polysaccharide monooxygenase (LPMO) that depolymerizes crystalline and amorphous polysaccharides via the oxidation of scissile alpha- or beta-(1-4)-glycosidic bonds, yielding specifically C1 oxidation product. Catalysis by LPMOs requires the reduction of the active-site copper from Cu(II) to Cu(I) by a reducing agent and H(2)O(2) or O(2) as a cosubstrate. Displays catalytic activity on insoluble cellulose using I-beta microfibril model substrate. This Heterobasidion irregulare (strain TC 32-1) protein is AA9 family lytic polysaccharide monooxygenase B.